The sequence spans 187 residues: Large ribosomal subunit protein bL25 (187 aa).

Belongs to the bacterial ribosomal protein bL25 family. CTC subfamily. In terms of assembly, part of the 50S ribosomal subunit; part of the 5S rRNA/L5/L18/L25 subcomplex. Contacts the 5S rRNA. Binds to the 5S rRNA independently of L5 and L18.

In terms of biological role, this is one of the proteins that binds to the 5S RNA in the ribosome where it forms part of the central protuberance. In Tropheryma whipplei (strain Twist) (Whipple's bacillus), this protein is Large ribosomal subunit protein bL25.